Here is a 556-residue protein sequence, read N- to C-terminus: Zinc finger protein 18 (556 aa).

The region spanning 41-123 (RQLFRQFRYQ…TLVESLKGEP (83 aa)) is the SCAN box domain. Residues 169–195 (QDLPLQNSSSATGELLSHGVKEESDME) form a disordered region. Residues 218–291 (ELGTAVLPPL…HLHGAEKMAR (74 aa)) enclose the KRAB domain. C2H2-type zinc fingers lie at residues 415 to 437 (PTCR…QRTH), 443 to 465 (FHCH…QRTH), 471 to 493 (CKCD…EKIH), 499 to 521 (YKCP…QRVH), and 527 to 549 (YKCT…QRSH).

This sequence belongs to the krueppel C2H2-type zinc-finger protein family.

The protein localises to the nucleus. May be involved in transcriptional regulation. This is Zinc finger protein 18 (Znf18) from Mus musculus (Mouse).